We begin with the raw amino-acid sequence, 328 residues long: Coiled-coil domain-containing protein 54 (328 aa).

Residues 122 to 151 (TTKDILSMKEDIKALKKKVTELEKQNSYSR) are a coiled coil. Residue threonine 182 is modified to Phosphothreonine. The segment covering 186 to 197 (TDREMSSAEPEK) has biased composition (basic and acidic residues). Positions 186–205 (TDREMSSAEPEKVPSYPKST) are disordered.

This chain is Coiled-coil domain-containing protein 54 (CCDC54), found in Macaca fascicularis (Crab-eating macaque).